Reading from the N-terminus, the 198-residue chain is Endonuclease V (198 aa).

Mg(2+) is bound by residues aspartate 38 and aspartate 101.

It belongs to the endonuclease V family. It depends on Mg(2+) as a cofactor.

Its subcellular location is the cytoplasm. The catalysed reaction is Endonucleolytic cleavage at apurinic or apyrimidinic sites to products with a 5'-phosphate.. Its function is as follows. DNA repair enzyme involved in the repair of deaminated bases. Selectively cleaves double-stranded DNA at the second phosphodiester bond 3' to a deoxyinosine leaving behind the intact lesion on the nicked DNA. The protein is Endonuclease V of Saccharolobus islandicus (strain M.16.4 / Kamchatka #3) (Sulfolobus islandicus).